Consider the following 791-residue polypeptide: MKFSENWLRSHVPIQASREELAATLTAIGLEVEAVTPLGDALGQVVVARIIAAVRHPEADRLQVCSVDAGQGELLQIVCGAPNARAGLVAPLALVGAQIGELTIKAAKLRGVASNGMLCSAKELGLDSDASGLFELPDDAPVGQALAEYLGLPDASIEIKLTPNRADCFSVRGIAFDVAAACASEVAAFDAAAVAPVSTRTLAVELNAGSEAPRYCGRVIEGIDPAATTPVWMAERLRRSGVRPVSLLVDITQYVMLELGQPMHAFDLDTLHGPVGVRRSRAGEQLALLDGREVTLDDSFLTITDADRPVALAGLMGGLDTRVTNTTRNVFLESAYFDPAAIMGRGRKLGLHTDAGHRFERGVDPALAPQAIEVATRLVLELAGGMPGPVVDAALPHHLPQPASILLRRARIARVLGIQIDDADVARILTALGMHVEAAADGWQVTAPSRRFDIAIEEDLIEELARIHGYDRVPTTLPGGASRIAMPSETQLDELSVRRQLVARELQETINYAFVDAALLERWQLTDGVVPLANPLSAELAVMRPRLLPGLVATLGRNVARQVGRVRLFELGKVFSAAGPGDAPVESQQVAAAVCGDALALQWGEPARKVDFHDLKGDLLALAAASGAVLEFQPSTQPFGHPGRSADIYRDGVCIGWIGQVHPRLAKSLDIDVDVIAFELQLAPLVKRALPRAGELSRYPSMRRDLAFLVPDAVSWAALSASVRTSVGPLLREVQLFDRYVGQGVEPGFKSLAMGLILQDNSRTLTDRDVDAVVADVVAVIEREHRARIRG.

Positions 39–147 constitute a tRNA-binding domain; sequence GDALGQVVVA…DDAPVGQALA (109 aa). Residues 400-475 form the B5 domain; that stretch reads PQPASILLRR…RIHGYDRVPT (76 aa). The Mg(2+) site is built by D453, D459, E462, and E463. In terms of domain architecture, FDX-ACB spans 697–790; it reads SRYPSMRRDL…IEREHRARIR (94 aa).

Belongs to the phenylalanyl-tRNA synthetase beta subunit family. Type 1 subfamily. Tetramer of two alpha and two beta subunits. Mg(2+) serves as cofactor.

It localises to the cytoplasm. It catalyses the reaction tRNA(Phe) + L-phenylalanine + ATP = L-phenylalanyl-tRNA(Phe) + AMP + diphosphate + H(+). The chain is Phenylalanine--tRNA ligase beta subunit from Xanthomonas campestris pv. campestris (strain 8004).